Reading from the N-terminus, the 340-residue chain is Protein-arginine kinase (340 aa).

Positions 21 to 242 constitute a Phosphagen kinase C-terminal domain; the sequence is VVLSSRIRLA…EQIIMQERVA (222 aa). ATP contacts are provided by residues 24–28, His79, Arg113, 164–168, and 195–200; these read SSRIR, RASVM, and RGIYGE.

This sequence belongs to the ATP:guanido phosphotransferase family.

The enzyme catalyses L-arginyl-[protein] + ATP = N(omega)-phospho-L-arginyl-[protein] + ADP + H(+). Its function is as follows. Catalyzes the specific phosphorylation of arginine residues in proteins. The chain is Protein-arginine kinase from Listeria monocytogenes serovar 1/2a (strain ATCC BAA-679 / EGD-e).